The primary structure comprises 306 residues: tRNA dimethylallyltransferase (306 aa).

9-16 serves as a coordination point for ATP; sequence GPTAIGKT. 11–16 lines the substrate pocket; sequence TAIGKT. The tract at residues 34–37 is interaction with substrate tRNA; the sequence is DSMQ.

The protein belongs to the IPP transferase family. As to quaternary structure, monomer. It depends on Mg(2+) as a cofactor.

It carries out the reaction adenosine(37) in tRNA + dimethylallyl diphosphate = N(6)-dimethylallyladenosine(37) in tRNA + diphosphate. In terms of biological role, catalyzes the transfer of a dimethylallyl group onto the adenine at position 37 in tRNAs that read codons beginning with uridine, leading to the formation of N6-(dimethylallyl)adenosine (i(6)A). The sequence is that of tRNA dimethylallyltransferase from Lactobacillus acidophilus (strain ATCC 700396 / NCK56 / N2 / NCFM).